A 274-amino-acid chain; its full sequence is 3-methyl-2-oxobutanoate hydroxymethyltransferase (274 aa).

Positions 46 and 85 each coordinate Mg(2+). 3-methyl-2-oxobutanoate is bound by residues 46–47 (DS), Asp85, and Lys115. Glu117 contacts Mg(2+). Catalysis depends on Glu184, which acts as the Proton acceptor.

This sequence belongs to the PanB family. Homodecamer; pentamer of dimers. Mg(2+) is required as a cofactor.

Its subcellular location is the cytoplasm. The enzyme catalyses 3-methyl-2-oxobutanoate + (6R)-5,10-methylene-5,6,7,8-tetrahydrofolate + H2O = 2-dehydropantoate + (6S)-5,6,7,8-tetrahydrofolate. It participates in cofactor biosynthesis; coenzyme A biosynthesis. In terms of biological role, catalyzes the reversible reaction in which hydroxymethyl group from 5,10-methylenetetrahydrofolate is transferred onto alpha-ketoisovalerate to form ketopantoate. The chain is 3-methyl-2-oxobutanoate hydroxymethyltransferase from Halobacterium salinarum (strain ATCC 29341 / DSM 671 / R1).